A 55-amino-acid chain; its full sequence is ATP synthase F(0) complex subunit 8 (55 aa).

A helical transmembrane segment spans residues 9–29 (WFFIMIMSWAVFLLLIQPKLL).

Belongs to the ATPase protein 8 family. As to quaternary structure, component of the ATP synthase complex composed at least of ATP5F1A/subunit alpha, ATP5F1B/subunit beta, ATP5MC1/subunit c (homooctomer), MT-ATP6/subunit a, MT-ATP8/subunit 8, ATP5ME/subunit e, ATP5MF/subunit f, ATP5MG/subunit g, ATP5MK/subunit k, ATP5MJ/subunit j, ATP5F1C/subunit gamma, ATP5F1D/subunit delta, ATP5F1E/subunit epsilon, ATP5PF/subunit F6, ATP5PB/subunit b, ATP5PD/subunit d, ATP5PO/subunit OSCP. ATP synthase complex consists of a soluble F(1) head domain (subunits alpha(3) and beta(3)) - the catalytic core - and a membrane F(0) domain - the membrane proton channel (subunits c, a, 8, e, f, g, k and j). These two domains are linked by a central stalk (subunits gamma, delta, and epsilon) rotating inside the F1 region and a stationary peripheral stalk (subunits F6, b, d, and OSCP).

The protein resides in the mitochondrion membrane. Its function is as follows. Subunit 8, of the mitochondrial membrane ATP synthase complex (F(1)F(0) ATP synthase or Complex V) that produces ATP from ADP in the presence of a proton gradient across the membrane which is generated by electron transport complexes of the respiratory chain. ATP synthase complex consist of a soluble F(1) head domain - the catalytic core - and a membrane F(1) domain - the membrane proton channel. These two domains are linked by a central stalk rotating inside the F(1) region and a stationary peripheral stalk. During catalysis, ATP synthesis in the catalytic domain of F(1) is coupled via a rotary mechanism of the central stalk subunits to proton translocation. In vivo, can only synthesize ATP although its ATP hydrolase activity can be activated artificially in vitro. Part of the complex F(0) domain. In Rhea americana (Greater rhea), this protein is ATP synthase F(0) complex subunit 8.